Here is a 625-residue protein sequence, read N- to C-terminus: Folylpolyglutamate synthase (625 aa).

Position 141 to 144 (glycine 141 to serine 144) interacts with ATP. The Mg(2+) site is built by serine 165, glutamate 234, and histidine 262. The ATP site is built by arginine 384 and aspartate 414.

It belongs to the folylpolyglutamate synthase family. A monovalent cation serves as cofactor.

Its subcellular location is the mitochondrion inner membrane. The protein localises to the mitochondrion matrix. The enzyme catalyses (6S)-5,6,7,8-tetrahydrofolyl-(gamma-L-Glu)(n) + L-glutamate + ATP = (6S)-5,6,7,8-tetrahydrofolyl-(gamma-L-Glu)(n+1) + ADP + phosphate + H(+). It functions in the pathway cofactor biosynthesis; tetrahydrofolylpolyglutamate biosynthesis. Functionally, catalyzes conversion of folates to polyglutamate derivatives allowing concentration of folate compounds in the cell and the intracellular retention of these cofactors, which are important substrates for most of the folate-dependent enzymes that are involved in one-carbon transfer reactions involved in purine, pyrimidine and amino acid synthesis. Essential for organellar and whole-plant folate homeostasis. The polypeptide is Folylpolyglutamate synthase (Arabidopsis thaliana (Mouse-ear cress)).